A 143-amino-acid polypeptide reads, in one-letter code: Small ribosomal subunit protein uS12 (143 aa).

The segment covering 1 to 19 (MGKPRGIRTARKHVNHRRE) has biased composition (basic residues). The tract at residues 1 to 21 (MGKPRGIRTARKHVNHRREQR) is disordered. Position 62 is a hydroxyproline (proline 62).

This sequence belongs to the universal ribosomal protein uS12 family. As to quaternary structure, component of the 40S small ribosomal subunit.

The protein resides in the cytoplasm. It is found in the cytosol. The protein localises to the rough endoplasmic reticulum. The polypeptide is Small ribosomal subunit protein uS12 (RpS23) (Papilio dardanus (African swallowtail butterfly)).